Here is a 2488-residue protein sequence, read N- to C-terminus: Neuron navigator 2 (2488 aa).

In terms of domain architecture, Calponin-homology (CH) spans 85–192 (GFDTQIYTDW…LFFSLSRYKQ (108 aa)). Low complexity-rich tracts occupy residues 194-204 (QQQPQKQHLSS), 221-247 (QAGT…PHQQ), and 255-267 (QSSA…SQSK). Disordered stretches follow at residues 194–675 (QQQP…GSNT) and 706–727 (TEGN…SHFT). The span at 299–315 (GGSTTANNRRSQSFNNY) shows a compositional bias: polar residues. The segment covering 356–369 (SGSSSTPTNCSTSS) has biased composition (low complexity). Positions 384 to 396 (KSLSVKHSATVSM) are enriched in polar residues. Over residues 401 to 410 (PPGPEAPRPT) the composition is skewed to pro residues. Over residues 492 to 506 (RTFSRALTNKKSSLK) the composition is skewed to polar residues. Residues 498-531 (LTNKKSSLKGNEKEKEKQQREKDKEKSKDLAKRA) adopt a coiled-coil conformation. A compositionally biased stretch (basic and acidic residues) spans 507–547 (GNEKEKEKQQREKDKEKSKDLAKRASVTERLDLKEEPKEDP). The segment covering 592–606 (MKSMPGKSPSAPAPS) has biased composition (low complexity). The span at 615 to 626 (GKLSSGLPQQKP) shows a compositional bias: polar residues. 2 stretches are compositionally biased toward low complexity: residues 633-642 (SSSSSSLASS) and 657-675 (SSQT…GSNT). Positions 706–719 (TEGNVTAESSSTGV) are enriched in polar residues. Positions 743 to 771 (EARRLRTVKNIADLRQNLEETMSSLRGTQ) form a coiled coil. 9 disordered regions span residues 804 to 824 (LSWR…PSMG), 939 to 1151 (LGLG…QSGS), 1177 to 1200 (KSSA…NQDD), 1213 to 1283 (YRSL…SDNE), 1295 to 1338 (PAAQ…PIAT), 1355 to 1412 (MTQQ…TNAS), 1440 to 1460 (SLSS…ASSK), 1473 to 1560 (VKTT…VTSP), and 1591 to 1629 (SLSN…SFRD). Positions 939 to 985 (LGLGDADSWDDSSSVSSGISDTIDNLSTDDINTSSSISSYANTPASS) are enriched in low complexity. Over residues 1091–1102 (KTDDAKVSEKGR) the composition is skewed to basic and acidic residues. Positions 1130 to 1142 (PSSSRTPTANANS) are enriched in polar residues. Positions 1220-1245 (SKSNSRNGAGNRSSTSSIDSNISSKS) are enriched in low complexity. The segment covering 1299 to 1309 (PVSSPAQTSLQ) has biased composition (polar residues). 2 stretches are compositionally biased toward low complexity: residues 1363-1380 (SPSG…PLYS) and 1388-1404 (SPLA…PSNS). Residues 1440–1456 (SLSSGGVPSHNSSTGLI) are compositionally biased toward polar residues. Over residues 1477–1489 (LSESPLSSPAASP) the composition is skewed to low complexity. Ser-1480, Ser-1484, and Ser-1488 each carry phosphoserine. 2 stretches are compositionally biased toward basic and acidic residues: residues 1498 to 1510 (RKQD…DRNT) and 1526 to 1535 (TQEDAKEWLR). Low complexity predominate over residues 1549–1560 (SPFSSGSSVTSP). The stretch at 1686 to 1773 (EEKCQSEIRK…AAAQAAINGV (88 aa)) forms a coiled coil. Disordered regions lie at residues 1790–1887 (ADLR…LRNS) and 1951–1985 (AEND…MGLS). Polar residues-rich tracts occupy residues 1800–1820 (SDSV…SNIE), 1875–1887 (NGST…LRNS), and 1959–1985 (ESQG…MGLS). Residues 1897 to 1964 (MDSEAETVMQ…RLKSESQGSG (68 aa)) adopt a coiled-coil conformation. Ser-1977 carries the post-translational modification Phosphoserine. 2157-2164 (GPSGTGKT) provides a ligand contact to ATP. Residues 2423 to 2488 (DGYSMPREGS…ILDSSLESTL (66 aa)) are disordered. The segment covering 2460-2473 (YSSPQSYDSDSNSN) has biased composition (low complexity).

It belongs to the Nav/unc-53 family. In terms of tissue distribution, highly expressed in the brain, kidney and liver. Also expressed in the thyroid, mammary gland, spinal cord, heart, placenta and lung. Abundantly expressed in colon cancers.

The protein resides in the nucleus. The catalysed reaction is ATP + H2O = ADP + phosphate + H(+). Its function is as follows. Possesses 3' to 5' helicase activity and exonuclease activity. Involved in neuronal development, specifically in the development of different sensory organs. The chain is Neuron navigator 2 (NAV2) from Homo sapiens (Human).